The primary structure comprises 4010 residues: Extracellular matrix organizing protein FRAS1 (4010 aa).

Positions methionine 1–glycine 25 are cleaved as a signal peptide. VWFC domains are found at residues alanine 26–alanine 87, glycine 92–valine 152, lysine 156–serine 216, arginine 218–alanine 278, and arginine 282–isoleucine 342. Over alanine 26–serine 3903 the chain is Extracellular. Serine 343 is modified (phosphoserine). The VWFC 6 domain maps to serine 358 to threonine 416. FU repeat units follow at residues lysine 408 to glutamine 459, glycine 461 to glutamine 504, histidine 506 to asparagine 552, glutamine 554 to alanine 598, threonine 601 to proline 646, histidine 648 to leucine 704, threonine 707 to asparagine 752, glutamate 754 to leucine 799, valine 802 to lysine 851, arginine 853 to leucine 899, asparagine 902 to leucine 947, threonine 951 to arginine 996, serine 998 to alanine 1041, and lysine 1045 to glycine 1088. The N-linked (GlcNAc...) asparagine glycan is linked to asparagine 727. N-linked (GlcNAc...) asparagine glycans are attached at residues asparagine 1094 and asparagine 1107. CSPG repeat units lie at residues threonine 1101–serine 1196, alanine 1216–asparagine 1307, alanine 1328–serine 1440, alanine 1465–alanine 1561, proline 1597–threonine 1691, glycine 1712–serine 1812, and proline 1834–serine 1938. N-linked (GlcNAc...) asparagine glycosylation occurs at asparagine 1506. Residue asparagine 1779 is glycosylated (N-linked (GlcNAc...) asparagine). 2 N-linked (GlcNAc...) asparagine glycosylation sites follow: asparagine 1950 and asparagine 1980. CSPG repeat units follow at residues glutamate 1959–threonine 2059, isoleucine 2080–valine 2179, proline 2201–serine 2293, alanine 2313–serine 2406, and threonine 2441–lysine 2538. Calx-beta domains follow at residues valine 2545–serine 2648, alanine 2661–alanine 2772, alanine 2786–serine 2892, isoleucine 2907–glycine 3009, and alanine 3027–glycine 3131. N-linked (GlcNAc...) asparagine glycosylation is found at asparagine 2565, asparagine 2666, and asparagine 2684. N-linked (GlcNAc...) asparagine glycosylation is found at asparagine 2910, asparagine 2987, asparagine 3072, asparagine 3220, asparagine 3678, and asparagine 3877. A helical transmembrane segment spans residues isoleucine 3904 to valine 3924. Residues threonine 3925–valine 4010 lie on the Cytoplasmic side of the membrane.

It belongs to the FRAS1 family.

Its subcellular location is the cell membrane. In terms of biological role, involved in extracellular matrix organization. Required for the regulation of epidermal-basement membrane adhesion responsible for proper organogenesis during embryonic development. Involved in brain organization and function. The chain is Extracellular matrix organizing protein FRAS1 from Mus musculus (Mouse).